A 482-amino-acid chain; its full sequence is Lipoamide acyltransferase component of branched-chain alpha-keto acid dehydrogenase complex, mitochondrial (482 aa).

The N-terminal 61 residues, 1–61 (MAAARVLRTW…HSLRTAAVLQ (61 aa)), are a transit peptide targeting the mitochondrion. A Lipoyl-binding domain is found at 64-139 (VVQFKLSDIG…YVGKPLIDIE (76 aa)). An N6-lipoyllysine modification is found at Lys-105. At Lys-133 the chain carries N6-succinyllysine. Residues 145–160 (DSEEDVVETPAVSHDE) are critical for association with PPM1K. The 38-residue stretch at 172 to 209 (LATPAVRRLAMENNIKLSEVVGSGKDGRILKEDILSFL) folds into the Peripheral subunit-binding (PSBD) domain. Lys-196 is modified (N6-acetyllysine; alternate). Lys-196 carries the N6-succinyllysine; alternate modification. Lys-202 is subject to N6-acetyllysine. Residues 217–252 (LPPSPKSEITPPPPQPKDRTFPTPIAKPPVFTGKDR) form a disordered region. Residues 218 to 231 (PPSPKSEITPPPPQ) are compositionally biased toward pro residues. At Ser-220 the chain carries Phosphoserine. N6-acetyllysine occurs at positions 243 and 250. Lys-261 is modified (N6-succinyllysine). Lys-289 carries the N6-acetyllysine; alternate modification. An N6-succinyllysine; alternate modification is found at Lys-289. CoA is bound at residue Arg-291. N6-acetyllysine is present on residues Lys-295 and Lys-304. The CoA site is built by Ser-306, Asp-349, Gln-378, Ser-399, Asn-400, Ser-403, Gly-424, and Ile-426. Lys-435 carries the N6-acetyllysine modification. Residue Lys-440 is modified to N6-acetyllysine; alternate. Lys-440 bears the N6-succinyllysine; alternate mark. Active-site residues include His-452 and Asp-456.

This sequence belongs to the 2-oxoacid dehydrogenase family. In terms of assembly, forms a 24-polypeptide structural core with octahedral symmetry that represents the E2 component of the branched-chain alpha-ketoacid dehydrogenase (BCKDH) complex. The BCKDH complex is composed of three major building blocks E1, E2 and E3. It is organized around E2, a 24-meric cubic core composed of DBT, to which are associated 6 to 12 copies of E1, and approximately 6 copies of the dehydrogenase E3, a DLD dimer. Interacts with PPM1K with a 24:1 stoichiometry; the N-terminal region (residues 49-61) of PPM1K and C-terminal linker of the lipoyl domain of DBT/E2 (residues 145-160) are critical for this interaction whereas the lipoyl prosthetic group is dispensable. This interaction requires colocalization in mitochondria. PPM1K competes with BCKDK for binding to DBT; this interaction is modulated by branched-chain alpha-keto acids (BCKAs). At steady state, BCKDH holoenzyme preferentially binds BCKDK and BCKDHA is phosphorylated. In response to high levels of BCKAs, BCKDK is replaced by PPM1K leading to BCKDHA dephosphorylation. (R)-lipoate is required as a cofactor.

It localises to the mitochondrion matrix. The enzyme catalyses N(6)-[(R)-dihydrolipoyl]-L-lysyl-[protein] + 2-methylpropanoyl-CoA = N(6)-[(R)-S(8)-2-methylpropanoyldihydrolipoyl]-L-lysyl-[protein] + CoA. Its function is as follows. The branched-chain alpha-keto dehydrogenase complex catalyzes the overall conversion of alpha-keto acids to acyl-CoA and CO(2). It contains multiple copies of three enzymatic components: branched-chain alpha-keto acid decarboxylase (E1), lipoamide acyltransferase (E2) and lipoamide dehydrogenase (E3). Within this complex, the catalytic function of this enzyme is to accept, and to transfer to coenzyme A, acyl groups that are generated by the branched-chain alpha-keto acid decarboxylase component. The protein is Lipoamide acyltransferase component of branched-chain alpha-keto acid dehydrogenase complex, mitochondrial (Dbt) of Mus musculus (Mouse).